A 1556-amino-acid chain; its full sequence is Lysine-specific demethylase 5C (1556 aa).

The 42-residue stretch at 14–55 folds into the JmjN domain; it reads CPVFEPSWAEFRDPLGYIAKIRPIAEKSGICKIRPPADWQPP. The 91-residue stretch at 79–169 folds into the ARID domain; the sequence is TRVKLNYLDQ…IVYPYEMYQS (91 aa). Over residues 197-207 the composition is skewed to polar residues; sequence LRQSVQPSKFN. The segment at 197 to 227 is disordered; the sequence is LRQSVQPSKFNSYGRRAKRLQPDPEPTEEDI. Glycyl lysine isopeptide (Lys-Gly) (interchain with G-Cter in SUMO2) cross-links involve residues K205, K229, K244, and K274. The interval 257-303 is disordered; it reads LRKKDKEGPECPPTVVVKEESGGDVKVESTSPKTFLESKEELSHSPE. Over residues 273–283 the composition is skewed to basic and acidic residues; it reads VKEESGGDVKV. Phosphoserine is present on S287. A Glycyl lysine isopeptide (Lys-Gly) (interchain with G-Cter in SUMO2) cross-link involves residue K295. Phosphoserine is present on residues S301 and S317. The PHD-type 1 zinc finger occupies 324-374; it reads SYVCRMCSRGDEDDKLLLCDGCDDNYHIFCLLPPLPEIPKGVWRCPKCVMA. Positions 468–634 constitute a JmjC domain; sequence EYATSGWNLN…AGRQCIEHYR (167 aa). Fe cation contacts are provided by H514, D517, and H602. Phosphoserine occurs at positions 893 and 897. A Glycyl lysine isopeptide (Lys-Gly) (interchain with G-Cter in SUMO2) cross-link involves residue K1127. The segment at 1185–1250 adopts a PHD-type 2 zinc-finger fold; it reads TSVCVCGQVP…KFLCPLCMRS (66 aa). 2 disordered regions span residues 1315 to 1362 and 1441 to 1556; these read LQAE…SPEK and ERHG…QQQL. Residues 1335 to 1345 are compositionally biased toward basic and acidic residues; it reads PLREGSGKDMP. Phosphoserine is present on S1359. The segment covering 1445-1460 has biased composition (basic residues); sequence SRARGRALERRRRRKV. Residues 1461 to 1478 are compositionally biased toward basic and acidic residues; that stretch reads DRGGEGDDPAREELEPKR. Residues 1485–1500 show a composition bias toward acidic residues; sequence EAEEAQEEEELEEETG. Polar residues-rich tracts occupy residues 1513-1522 and 1530-1540; these read SPSTQENQNG and SGPSAPFSTLS. The span at 1541–1556 shows a compositional bias: low complexity; sequence PQLHVPCPQQPPQQQL.

This sequence belongs to the JARID1 histone demethylase family. In terms of assembly, part of two distinct complexes, one containing E2F6, and the other containing REST. Interacts with ZMYND8. Requires Fe(2+) as cofactor.

Its subcellular location is the nucleus. The enzyme catalyses N(6),N(6),N(6)-trimethyl-L-lysyl(4)-[histone H3] + 3 2-oxoglutarate + 3 O2 = L-lysyl(4)-[histone H3] + 3 formaldehyde + 3 succinate + 3 CO2. Its function is as follows. Histone demethylase that specifically demethylates 'Lys-4' of histone H3, thereby playing a central role in histone code. Does not demethylate histone H3 'Lys-9', H3 'Lys-27', H3 'Lys-36', H3 'Lys-79' or H4 'Lys-20'. Demethylates trimethylated and dimethylated but not monomethylated H3 'Lys-4'. Participates in transcriptional repression of neuronal genes by recruiting histone deacetylases and REST at neuron-restrictive silencer elements. Represses the CLOCK-BMAL1 heterodimer-mediated transcriptional activation of the core clock component PER2. In Canis lupus familiaris (Dog), this protein is Lysine-specific demethylase 5C (KDM5C).